We begin with the raw amino-acid sequence, 642 residues long: Aryl hydrocarbon receptor nuclear translocator homolog (642 aa).

The 54-residue stretch at 13 to 66 (ASRENHCEIERRRRNKMTAYITELSDMVPTCSALARKPDKLTILRMAVAHMKAL) folds into the bHLH domain. PAS domains lie at 85–156 (DQEL…ESQN) and 271–341 (TAAN…LKQK). The 44-residue stretch at 346–389 (SLLYRARAKNSEYVWLRTQAYAFLNPYTDEVEYIVCTNSSGKTM) folds into the PAC domain. Residues 450–612 (QAPTPQQQQQ…GPAGAGQPQG (163 aa)) form a disordered region. Composition is skewed to polar residues over residues 463 to 482 (RPGS…THSP) and 528 to 554 (YQYQ…NGNR). A compositionally biased stretch (low complexity) spans 555 to 564 (QQAQPGAYQA).

As to quaternary structure, efficient DNA binding requires dimerization with another bHLH protein. Heterodimer with ahr, trh or sim. At stage 11, expression is detected in tracheal pits. At later stages, strong expression is also detected in the CNS.

It is found in the nucleus. Its function is as follows. Heterodimers of tgo/trh are involved in the control of breathless expression. Plays a role in the cellular or tissue response to oxygen deprivation. This chain is Aryl hydrocarbon receptor nuclear translocator homolog (tgo), found in Drosophila melanogaster (Fruit fly).